A 644-amino-acid polypeptide reads, in one-letter code: SURP and G-patch domain-containing protein 1 (644 aa).

Over residues 44-54 (REIEARMEQKA) the composition is skewed to basic and acidic residues. Disordered stretches follow at residues 44–74 (REIEARMEQKARQSHVASPQPPHPGEVADAQ) and 98–122 (AQASTDSAPRAPPSSPAPSSLKRPL). A Phosphothreonine modification is found at Thr128. The stretch at 188–230 (VIEKLARFVAEGGPELEKVAMEDYKDNPAFTFLHDKNSREFLY) is one SURP motif 1 repeat. Position 253 is a phosphoserine (Ser253). The SURP motif 2 repeat unit spans residues 263 to 306 (LAEKLARFIADGGPEVETIALQNNRENQAFSFLYDPNSQGYRYY). Disordered stretches follow at residues 316–342 (AKAGSTGSLPAPVPNPSLRRKSAPEAL) and 360–412 (PAVN…PSPL). Ser323 carries the phosphoserine modification. Residues 360–369 (PAVNPTPSIP) are compositionally biased toward pro residues. The short motif at 379-385 (KRKRKSR) is the Nuclear localization signal element. Ser408, Ser410, Ser413, and Ser484 each carry phosphoserine. The region spanning 561–608 (VENIGYQMLMKMGWKEGEGLGTEGQGIKNPVNKGATTIDGAGFGIDRP) is the G-patch domain.

Component of the spliceosome.

It localises to the nucleus. Plays a role in pre-mRNA splicing. The chain is SURP and G-patch domain-containing protein 1 (Sugp1) from Rattus norvegicus (Rat).